Reading from the N-terminus, the 386-residue chain is MVEMSTGTTNLVRTLDSMDFLKMDRRTFMKAVSALGATAFLGTYQTEIVNALEFAETKVIWIHGSECTGCSESVLNGGNPDIVQALTKLNVNLAYHETLCMQQGIWNDGELVNTSELNSEILLEDLYKEGNYILVVEGSIPNGPDGSGRYLVIGNKTFKETLGEAAKNANAIVAVGACACWGGITSADSDIEKDTDYRGVAFKKTDASKGMLKELGIDKPVINIPGCPCHPDWVLLTLGAVILGKIKIPDDLPAALDQYGRPKVFFPPDHTVHENCPRRGYYDRGEFDTEVGGEKCLWKLGCKAPYAHADCGIRRWNGSVSMCTQAGGPCINCVDPGFPDASRPLYVEAEDKGIVGANIDTIAKVAVGAAAVAAGVHAVRRMGKGE.

The segment at residues Met1 to Ala51 is a signal peptide (tat-type signal). Residues Cys67, Cys70, Cys178, Cys227, His273, Cys276, Cys296, and Cys302 each coordinate [4Fe-4S] cluster. The [3Fe-4S] cluster site is built by Cys311, Cys330, and Cys333.

It belongs to the [NiFe]/[NiFeSe] hydrogenase small subunit family. As to quaternary structure, composed of a large subunit (VhoA), a small subunit (VhoG) and a cytochrome subunit (VhoC). Requires [4Fe-4S] cluster as cofactor. [3Fe-4S] cluster serves as cofactor. Post-translationally, predicted to be exported by the Tat system. The position of the signal peptide cleavage has not been experimentally proven.

Its subcellular location is the cell membrane. The catalysed reaction is methanophenazine + H2 = dihydromethanophenazine. Its function is as follows. Part of the F420 non-reducing hydrogenase I complex that catalyzes the reduction of methanophenazine to dihydromethanophenazine. The chain is F420 non-reducing hydrogenase I small subunit from Methanosarcina mazei (strain ATCC BAA-159 / DSM 3647 / Goe1 / Go1 / JCM 11833 / OCM 88) (Methanosarcina frisia).